Reading from the N-terminus, the 667-residue chain is Transcription factor 4 (667 aa).

Residues 1–83 (MHHQQRMAAL…GTPYDHMTSR (83 aa)) form an essential for MYOD1 inhibition region. The short motif at 18–26 (DLLDFSAMF) is the 9aaTAD element. Disordered regions lie at residues 24 to 245 (AMFS…LGNS), 263 to 321 (LSYP…SQTG), 336 to 379 (HTNN…EGPL), 466 to 570 (SLLP…MANN), and 634 to 667 (KRRE…MGQM). Residues 29-49 (PVSSGKNGPTSLASGHFTGSN) are compositionally biased toward polar residues. A phosphoserine mark is found at Ser66, Ser87, and Ser92. Polar residues-rich tracts occupy residues 107–126 (GSYS…QQSL), 137–155 (GTLS…SSNN), 205–216 (KPATSTFPSSFF), and 266–306 (PSHS…TDSI). The span at 337–348 (TNNSFSSNPSTP) shows a compositional bias: low complexity. Residues 365–374 (NGGQASSSPN) show a composition bias toward polar residues. Residue Ser372 is modified to Phosphoserine. A leucine-zipper region spans residues 379 to 400 (LHSLQSRIEDRLERLDDAIHVL). Low complexity-rich tracts occupy residues 467 to 480 (LLPN…LPVQ) and 503 to 512 (GQSVSSGSSE). Residue Ser515 is modified to Phosphoserine. 2 stretches are compositionally biased toward basic and acidic residues: residues 527 to 542 (KSSE…KDIK) and 555 to 570 (PEQK…MANN). Positions 564-617 (ERRMANNARERLRVRDINEAFKELGRMVQLHLKSDKPQTKLLILHQAVAVILSL) constitute a bHLH domain. The tract at residues 619–642 (QQVRERNLNPKAACLKRREEEKVS) is class A specific domain.

In terms of assembly, efficient DNA binding requires dimerization with another bHLH protein. Forms homo- or heterooligomers with myogenin. Interacts with HIVEP2. Interacts with NEUROD2. Interacts with AGBL1. Interacts with BHLHA9. In terms of tissue distribution, expressed in adult heart, brain, placenta, skeletal muscle and to a lesser extent in the lung. In developing embryonic tissues, expression mostly occurs in the brain.

Its subcellular location is the nucleus. Its function is as follows. Transcription factor that binds to the immunoglobulin enhancer Mu-E5/KE5-motif. Involved in the initiation of neuronal differentiation. Activates transcription by binding to the E box (5'-CANNTG-3'). Binds to the E-box present in the somatostatin receptor 2 initiator element (SSTR2-INR) to activate transcription. Preferentially binds to either 5'-ACANNTGT-3' or 5'-CCANNTGG-3'. The polypeptide is Transcription factor 4 (TCF4) (Homo sapiens (Human)).